A 362-amino-acid polypeptide reads, in one-letter code: Probable prephenate dehydrogenase NovF (362 aa).

A Prephenate/arogenate dehydrogenase domain is found at 2 to 283 (RTAVIIGTGM…GIDGSNRVPG (282 aa)).

This sequence belongs to the prephenate/arogenate dehydrogenase family.

The catalysed reaction is prephenate + NAD(+) = 3-(4-hydroxyphenyl)pyruvate + CO2 + NADH. The protein operates within antibiotic biosynthesis; novobiocin biosynthesis. Functionally, probable prephenate dehydrogenase that produces 4-hydroxyphenylpyruvate (4HPP) in the novobiocin biosynthesis pathway. Novobiocin is an aminocoumarin family antibiotic that targets bacterial DNA gyrases. The chain is Probable prephenate dehydrogenase NovF (novF) from Streptomyces niveus (Streptomyces spheroides).